The following is a 253-amino-acid chain: Hydroxyacylglutathione hydrolase (253 aa).

Residues His-54, His-56, Asp-58, His-59, His-112, Asp-131, and His-169 each contribute to the Zn(2+) site.

The protein belongs to the metallo-beta-lactamase superfamily. Glyoxalase II family. In terms of assembly, monomer. It depends on Zn(2+) as a cofactor.

The enzyme catalyses an S-(2-hydroxyacyl)glutathione + H2O = a 2-hydroxy carboxylate + glutathione + H(+). Its pathway is secondary metabolite metabolism; methylglyoxal degradation; (R)-lactate from methylglyoxal: step 2/2. Functionally, thiolesterase that catalyzes the hydrolysis of S-D-lactoyl-glutathione to form glutathione and D-lactic acid. The protein is Hydroxyacylglutathione hydrolase of Bartonella quintana (strain Toulouse) (Rochalimaea quintana).